The sequence spans 678 residues: Macrolide export ATP-binding/permease protein MacB 1 (678 aa).

In terms of domain architecture, ABC transporter spans 11–249 (LRLENVSREF…PKMVDIPSVI (239 aa)). Residue 47–54 (GTSGSGKS) participates in ATP binding. 4 helical membrane passes run 303–323 (ALTMLGIIIGIASVVSVVALG), 558–578 (IAVISLIVGGIGVMNIMLVSV), 608–628 (LVCLLGGSLGVALSLGIGLLF), and 641–661 (AASIITAFVCSSLIGVIFGFF).

Belongs to the ABC transporter superfamily. Macrolide exporter (TC 3.A.1.122) family. In terms of assembly, homodimer. Part of the tripartite efflux system MacAB-TolC, which is composed of an inner membrane transporter, MacB, a periplasmic membrane fusion protein, MacA, and an outer membrane component, TolC. The complex forms a large protein conduit and can translocate molecules across both the inner and outer membranes. Interacts with MacA.

Its subcellular location is the cell inner membrane. Functionally, part of the tripartite efflux system MacAB-TolC. MacB is a non-canonical ABC transporter that contains transmembrane domains (TMD), which form a pore in the inner membrane, and an ATP-binding domain (NBD), which is responsible for energy generation. Confers resistance against macrolides. The chain is Macrolide export ATP-binding/permease protein MacB 1 from Yersinia pestis bv. Antiqua (strain Nepal516).